A 396-amino-acid chain; its full sequence is Phosphoglycerate kinase (396 aa).

Residues 21 to 23 (DLN), arginine 36, 59 to 62 (HFDR), arginine 118, and arginine 151 each bind substrate. Residues lysine 201, glutamate 323, and 353 to 356 (GGDT) each bind ATP.

Belongs to the phosphoglycerate kinase family. In terms of assembly, monomer.

The protein localises to the cytoplasm. It catalyses the reaction (2R)-3-phosphoglycerate + ATP = (2R)-3-phospho-glyceroyl phosphate + ADP. It participates in carbohydrate degradation; glycolysis; pyruvate from D-glyceraldehyde 3-phosphate: step 2/5. This is Phosphoglycerate kinase from Granulibacter bethesdensis (strain ATCC BAA-1260 / CGDNIH1).